The following is a 76-amino-acid chain: Exodeoxyribonuclease 7 small subunit (76 aa).

The protein belongs to the XseB family. Heterooligomer composed of large and small subunits.

Its subcellular location is the cytoplasm. It carries out the reaction Exonucleolytic cleavage in either 5'- to 3'- or 3'- to 5'-direction to yield nucleoside 5'-phosphates.. Its function is as follows. Bidirectionally degrades single-stranded DNA into large acid-insoluble oligonucleotides, which are then degraded further into small acid-soluble oligonucleotides. The protein is Exodeoxyribonuclease 7 small subunit of Staphylococcus aureus (strain MRSA252).